We begin with the raw amino-acid sequence, 211 residues long: Ribonuclease MRP protein subunit rmp1 (211 aa).

The helical transmembrane segment at 73–93 (PALGLVLLGILARVWFVMGGI) threads the bilayer. Residue Ser-156 is modified to Phosphoserine. The tract at residues 178 to 211 (SQGTKRKSKNSNSTVKKKKKRARKGRDEIDDIFG) is disordered. A compositionally biased stretch (basic residues) spans 181–201 (TKRKSKNSNSTVKKKKKRARK).

As to quaternary structure, component of RNase MRP complex which consists of an RNA moiety and at least 10 protein subunits.

It localises to the membrane. The protein localises to the nucleus. Its subcellular location is the nucleolus. Functions as part of ribonuclease MRP (RNase MRP), which is involved in rRNA processing in mitochondria. The chain is Ribonuclease MRP protein subunit rmp1 from Schizosaccharomyces pombe (strain 972 / ATCC 24843) (Fission yeast).